We begin with the raw amino-acid sequence, 37 residues long: Large ribosomal subunit protein bL36 (37 aa).

This sequence belongs to the bacterial ribosomal protein bL36 family.

This is Large ribosomal subunit protein bL36 from Synechococcus sp. (strain RCC307).